The chain runs to 229 residues: MEFKVLDKGFLRLVDILGDDYSAVKAARVSYGKGIKTPEKDKNLIFYLMEHKHETPFEHIVFTFHVKTPIFVARQWFRHRIGSFNEASLRYTELKDEFYLPDHIRKNIVEDKQKAVRVEELKLKEQALELIYNSIEDSYKVYRKLLELGVAREMARIVLPMSSYTQFYWTVNARSLMNFLNLRADSHAQWEIQQYAIKIAKIFKEKCPWTFESFLKFNYRGDILREVEL.

The ThyX domain maps to 1-217; that stretch reads MEFKVLDKGF…PWTFESFLKF (217 aa). FAD contacts are provided by residues Thr55, 78–80, and Glu86; that span reads RHR. Residues 75–78, 86–90, and Arg156 each bind dUMP; these read QWFR and EASLR. A ThyX motif motif is present at residues 78 to 88; the sequence is RHRIGSFNEAS. FAD is bound by residues 172 to 174 and Asn178; that span reads NAR. Arg183 provides a ligand contact to dUMP. The active-site Involved in ionization of N3 of dUMP, leading to its activation is the Arg183.

It belongs to the thymidylate synthase ThyX family. Homotetramer. FAD is required as a cofactor.

The enzyme catalyses dUMP + (6R)-5,10-methylene-5,6,7,8-tetrahydrofolate + NADPH + H(+) = dTMP + (6S)-5,6,7,8-tetrahydrofolate + NADP(+). Its pathway is pyrimidine metabolism; dTTP biosynthesis. Its function is as follows. Catalyzes the reductive methylation of 2'-deoxyuridine-5'-monophosphate (dUMP) to 2'-deoxythymidine-5'-monophosphate (dTMP) while utilizing 5,10-methylenetetrahydrofolate (mTHF) as the methyl donor, and NADPH and FADH(2) as the reductant. The sequence is that of Flavin-dependent thymidylate synthase from Thermosipho melanesiensis (strain DSM 12029 / CIP 104789 / BI429).